Consider the following 232-residue polypeptide: Zinc finger protein RTS2 (232 aa).

The C2H2-type zinc finger occupies 24 to 48 (YYCQICQRQCKDANGFQSHNKSPSH). Disordered regions lie at residues 180-199 (AKRQTEKVYQPEMKSEISGD) and 211-232 (GNGRVNKKKKKVPPRKDGIKFR).

The protein localises to the nucleus. The polypeptide is Zinc finger protein RTS2 (RTS2) (Saccharomyces cerevisiae (strain ATCC 204508 / S288c) (Baker's yeast)).